The primary structure comprises 177 residues: uncharacterized protein (177 aa).

To M.jannaschii MJ0628.

This is an uncharacterized protein from Methanocaldococcus jannaschii (strain ATCC 43067 / DSM 2661 / JAL-1 / JCM 10045 / NBRC 100440) (Methanococcus jannaschii).